Here is a 200-residue protein sequence, read N- to C-terminus: Nucleoside triphosphate pyrophosphatase (200 aa).

Catalysis depends on aspartate 79, which acts as the Proton acceptor.

It belongs to the Maf family. It depends on a divalent metal cation as a cofactor.

The protein resides in the cytoplasm. It catalyses the reaction a ribonucleoside 5'-triphosphate + H2O = a ribonucleoside 5'-phosphate + diphosphate + H(+). The enzyme catalyses a 2'-deoxyribonucleoside 5'-triphosphate + H2O = a 2'-deoxyribonucleoside 5'-phosphate + diphosphate + H(+). Its function is as follows. Nucleoside triphosphate pyrophosphatase. May have a dual role in cell division arrest and in preventing the incorporation of modified nucleotides into cellular nucleic acids. This Legionella pneumophila (strain Corby) protein is Nucleoside triphosphate pyrophosphatase.